A 249-amino-acid chain; its full sequence is Acetylglutamate kinase (249 aa).

Substrate-binding positions include 36–37 (GG), Arg-58, and Asn-147.

This sequence belongs to the acetylglutamate kinase family. ArgB subfamily.

The protein localises to the cytoplasm. The catalysed reaction is N-acetyl-L-glutamate + ATP = N-acetyl-L-glutamyl 5-phosphate + ADP. Its pathway is amino-acid biosynthesis; L-arginine biosynthesis; N(2)-acetyl-L-ornithine from L-glutamate: step 2/4. Functionally, catalyzes the ATP-dependent phosphorylation of N-acetyl-L-glutamate. The sequence is that of Acetylglutamate kinase from Thermus thermophilus (strain ATCC 27634 / DSM 579 / HB8).